Here is a 445-residue protein sequence, read N- to C-terminus: Zinc finger protein 296 (445 aa).

Basic residues predominate over residues 1–10 (MSRRKAGRVP). Positions 1-20 (MSRRKAGRVPRRVDPDTDTD) are disordered. A Glycyl lysine isopeptide (Lys-Gly) (interchain with G-Cter in SUMO2) cross-link involves residue K31. A disordered region spans residues 62–88 (SRPLGAPSTCAPRMPLSSKSSDRQPWT). 3 C2H2-type zinc fingers span residues 138–161 (LSCLQCGRQYTSPWKLLCHAQWDH), 212–234 (PTCDVCKKTLSSFSNLKVHMRSH), and 240–262 (YSCDQCSYACAQSSKLNRHKKTH). The segment at 256 to 359 (NRHKKTHRQL…TAPRKSHGPG (104 aa)) is disordered. Over residues 269 to 278 (SPSTSASSRG) the composition is skewed to polar residues. Over residues 320–332 (PGSGAQGGPGFVG) the composition is skewed to gly residues. Over residues 338 to 351 (KVERTDPVKIEKTA) the composition is skewed to basic and acidic residues. C2H2-type zinc fingers lie at residues 360–382 (GKCEFCGKSFTNSSNLTVHRRSH), 388–410 (YTCDQCPYACAQSSKLNRHRRTH), and 418–441 (VKCPHCLVPFGLQATLDKHLRQKH).

It belongs to the krueppel C2H2-type zinc-finger protein family. Interacts with KLF4. In terms of tissue distribution, strongly expressed in testis and embryonic stem cells.

Its subcellular location is the nucleus. May be a transcriptional corepressor with KLF4. This is Zinc finger protein 296 from Mus musculus (Mouse).